Reading from the N-terminus, the 57-residue chain is UPF0391 membrane protein azo1765 (57 aa).

Transmembrane regions (helical) follow at residues 1-21 and 33-53; these read MIKW…FGFT and VLFF…VGLG.

The protein belongs to the UPF0391 family.

The protein resides in the cell membrane. The polypeptide is UPF0391 membrane protein azo1765 (Azoarcus sp. (strain BH72)).